Consider the following 322-residue polypeptide: Protein-methionine-sulfoxide reductase catalytic subunit MsrP (322 aa).

A signal peptide (tat-type signal) is located at residues 1-59; sequence MSFRDALNLPSSEITDESVYRDRRRLLQLLALTPALGVAGCAEADPPPPPKTVVTPAQA. Mo-molybdopterin is bound by residues asparagine 79, 82–83, cysteine 137, threonine 172, asparagine 220, arginine 225, and 236–238; these read YE and SIK.

This sequence belongs to the MsrP family. In terms of assembly, heterodimer of a catalytic subunit (MsrP) and a heme-binding subunit (MsrQ). Mo-molybdopterin serves as cofactor. Post-translationally, predicted to be exported by the Tat system. The position of the signal peptide cleavage has not been experimentally proven.

It localises to the periplasm. The enzyme catalyses L-methionyl-[protein] + a quinone + H2O = L-methionyl-(S)-S-oxide-[protein] + a quinol. It catalyses the reaction L-methionyl-[protein] + a quinone + H2O = L-methionyl-(R)-S-oxide-[protein] + a quinol. Part of the MsrPQ system that repairs oxidized periplasmic proteins containing methionine sulfoxide residues (Met-O), using respiratory chain electrons. Thus protects these proteins from oxidative-stress damage caused by reactive species of oxygen and chlorine generated by the host defense mechanisms. MsrPQ is essential for the maintenance of envelope integrity under bleach stress, rescuing a wide series of structurally unrelated periplasmic proteins from methionine oxidation. The catalytic subunit MsrP is non-stereospecific, being able to reduce both (R-) and (S-) diastereoisomers of methionine sulfoxide. The polypeptide is Protein-methionine-sulfoxide reductase catalytic subunit MsrP (Xanthomonas axonopodis pv. citri (strain 306)).